The chain runs to 210 residues: Uridine kinase (210 aa).

Position 12–19 (12–19 (GGSGSGKT)) interacts with ATP.

Belongs to the uridine kinase family.

Its subcellular location is the cytoplasm. The catalysed reaction is uridine + ATP = UMP + ADP + H(+). It catalyses the reaction cytidine + ATP = CMP + ADP + H(+). It functions in the pathway pyrimidine metabolism; CTP biosynthesis via salvage pathway; CTP from cytidine: step 1/3. Its pathway is pyrimidine metabolism; UMP biosynthesis via salvage pathway; UMP from uridine: step 1/1. This Leuconostoc citreum (strain KM20) protein is Uridine kinase.